We begin with the raw amino-acid sequence, 421 residues long: Phosphatidylinositol 5-phosphate 4-kinase type-2 gamma (421 aa).

Ala-2 bears the N-acetylalanine mark. Ser-26 bears the Phosphoserine mark. Residues 43–420 (AADPLVGVFL…RFLDFIANIF (378 aa)) enclose the PIPK domain. The tract at residues 69–75 (VMLLPDD) is required for interaction with PIP5K1A. Ser-349 carries the post-translational modification Phosphoserine.

As to quaternary structure, interacts with PIP5K1A; the interaction inhibits PIP5K1A kinase activity. Phosphorylated, phosphorylation is induced by EGF.

The protein resides in the endoplasmic reticulum. It is found in the cytoplasm. It carries out the reaction a 1,2-diacyl-sn-glycero-3-phospho-(1D-myo-inositol-5-phosphate) + ATP = a 1,2-diacyl-sn-glycero-3-phospho-(1D-myo-inositol-4,5-bisphosphate) + ADP + H(+). The catalysed reaction is 1,2-dihexadecanoyl-sn-glycero-3-phospho-(1D-myo-inositol-5-phosphate) + ATP = 1,2-dihexadecanoyl-sn-glycero-3-phospho-(1D-myo-inositol-4,5-bisphosphate) + ADP + H(+). It catalyses the reaction 1,2-dihexadecanoyl-sn-glycero-3-phospho-(1D-myo-inositol-5-phosphate) + GTP = 1,2-dihexadecanoyl-sn-glycero-3-phospho-(1D-myo-inositol-4,5-bisphosphate) + GDP + H(+). Its function is as follows. Phosphatidylinositol 5-phosphate 4-kinase with low enzymatic activity. May be a GTP sensor, has higher GTP-dependent kinase activity than ATP-dependent kinase activity. PIP4Ks negatively regulate insulin signaling through a catalytic-independent mechanism. They interact with PIP5Ks and suppress PIP5K-mediated PtdIns(4,5)P2 synthesis and insulin-dependent conversion to PtdIns(3,4,5)P3. The sequence is that of Phosphatidylinositol 5-phosphate 4-kinase type-2 gamma from Mus musculus (Mouse).